A 178-amino-acid chain; its full sequence is Large ribosomal subunit protein uL6 (178 aa).

It belongs to the universal ribosomal protein uL6 family. In terms of assembly, part of the 50S ribosomal subunit.

This protein binds to the 23S rRNA, and is important in its secondary structure. It is located near the subunit interface in the base of the L7/L12 stalk, and near the tRNA binding site of the peptidyltransferase center. The sequence is that of Large ribosomal subunit protein uL6 from Limosilactobacillus fermentum (strain NBRC 3956 / LMG 18251) (Lactobacillus fermentum).